We begin with the raw amino-acid sequence, 297 residues long: Undecaprenyl-diphosphatase (297 aa).

7 helical membrane passes run 39-59, 85-105, 113-133, 151-171, 190-210, 220-240, and 249-269; these read PGAA…LIYF, ARLA…GLTL, FRSL…LLVV, GILI…RSGT, SFLL…KHLL, ALWV…AWLL, and LVFV…LQTG.

Belongs to the UppP family.

It localises to the cell inner membrane. It catalyses the reaction di-trans,octa-cis-undecaprenyl diphosphate + H2O = di-trans,octa-cis-undecaprenyl phosphate + phosphate + H(+). Functionally, catalyzes the dephosphorylation of undecaprenyl diphosphate (UPP). Confers resistance to bacitracin. This is Undecaprenyl-diphosphatase from Myxococcus xanthus (strain DK1622).